The following is a 288-amino-acid chain: UAP56-interacting factor (288 aa).

Residues 11 to 29 (TIDKIDMSLDDIIKLNKQE) carry the UAP56-binding motif motif. Positions 183–202 (DLPELSKTPPWRTSVSSGGS) are disordered.

Belongs to the UIF family.

It is found in the nucleus. The protein localises to the nucleoplasm. The protein resides in the nucleus speckle. Its function is as follows. Required for mRNA export from the nucleus to the cytoplasm. Acts as an adapter that uses the ddx39b/uap56-nfx1 pathway to ensure efficient mRNA export and delivering to the nuclear pore. The chain is UAP56-interacting factor (fyttd1) from Xenopus laevis (African clawed frog).